Consider the following 662-residue polypeptide: Intracellular exo-alpha-(1-&gt;5)-L-arabinofuranosidase (662 aa).

Alpha-L-arabinofuranose-binding residues include Glu27, Asn72, and Asn174. Glu175 functions as the Proton donor/acceptor in the catalytic mechanism. Alpha-L-arabinofuranose is bound by residues Tyr246, Glu294, and Gln352. The active-site Nucleophile is Glu294. Disordered stretches follow at residues 454–483, 497–548, and 588–662; these read LADA…SLRD, SIRC…RTAR, and WTRW…ARRC. The span at 519–533 shows a compositional bias: low complexity; sequence TGTPPAAPPSSSSAP. Basic and acidic residues predominate over residues 537 to 547; the sequence is PTARRSPDRTA. 3 stretches are compositionally biased toward low complexity: residues 590-603, 628-641, and 649-662; these read RWAP…PSRR, RRSP…TPAP, and AGAS…ARRC.

The protein belongs to the glycosyl hydrolase 51 family. As to quaternary structure, homohexamer; trimer of dimers.

The protein localises to the cytoplasm. The catalysed reaction is Hydrolysis of terminal non-reducing alpha-L-arabinofuranoside residues in alpha-L-arabinosides.. It functions in the pathway glycan metabolism; L-arabinan degradation. In terms of biological role, involved in the degradation of arabinan and is a key enzyme in the complete degradation of the plant cell wall. Catalyzes the cleavage of terminal alpha-(1-&gt;5)-arabinofuranosyl bonds in different hemicellulosic homopolysaccharides (arabino-oligoxylosides, branched and debranched arabinans). It acts rapidly on the short-chain arabino-oligoxylosides from digestion of xylan with xylanases. It hydrolyzes slowly arabinan and arabinoxylan from wheat and rye flour. The protein is Intracellular exo-alpha-(1-&gt;5)-L-arabinofuranosidase of Streptomyces lividans.